Consider the following 409-residue polypeptide: Arginine deiminase (409 aa).

Catalysis depends on Cys399, which acts as the Amidino-cysteine intermediate.

Belongs to the arginine deiminase family.

It is found in the cytoplasm. It carries out the reaction L-arginine + H2O = L-citrulline + NH4(+). It functions in the pathway amino-acid degradation; L-arginine degradation via ADI pathway; carbamoyl phosphate from L-arginine: step 1/2. The polypeptide is Arginine deiminase (Streptococcus sanguinis (strain SK36)).